The chain runs to 373 residues: Putative glutamate--cysteine ligase 2-2 (373 aa).

The protein belongs to the glutamate--cysteine ligase type 2 family. YbdK subfamily.

The catalysed reaction is L-cysteine + L-glutamate + ATP = gamma-L-glutamyl-L-cysteine + ADP + phosphate + H(+). ATP-dependent carboxylate-amine ligase which exhibits weak glutamate--cysteine ligase activity. The polypeptide is Putative glutamate--cysteine ligase 2-2 (Legionella pneumophila (strain Corby)).